Here is a 102-residue protein sequence, read N- to C-terminus: Protein translation factor SUI1 homolog (102 aa).

It belongs to the SUI1 family.

This is Protein translation factor SUI1 homolog from Methanococcus maripaludis (strain C5 / ATCC BAA-1333).